The chain runs to 70 residues: Large ribosomal subunit protein bL31 (70 aa).

The Zn(2+) site is built by Cys-16, Cys-18, Cys-38, and Cys-41.

Belongs to the bacterial ribosomal protein bL31 family. Type A subfamily. As to quaternary structure, part of the 50S ribosomal subunit. The cofactor is Zn(2+).

Binds the 23S rRNA. The sequence is that of Large ribosomal subunit protein bL31 from Bifidobacterium longum (strain DJO10A).